The primary structure comprises 354 residues: Methylthioribose-1-phosphate isomerase (354 aa).

Substrate is bound by residues 49–51, arginine 92, and glutamine 199; that span reads RGA. The active-site Proton donor is aspartate 240. 250–251 contacts substrate; the sequence is NK.

It belongs to the eIF-2B alpha/beta/delta subunits family. MtnA subfamily.

It catalyses the reaction 5-(methylsulfanyl)-alpha-D-ribose 1-phosphate = 5-(methylsulfanyl)-D-ribulose 1-phosphate. Its pathway is amino-acid biosynthesis; L-methionine biosynthesis via salvage pathway; L-methionine from S-methyl-5-thio-alpha-D-ribose 1-phosphate: step 1/6. Functionally, catalyzes the interconversion of methylthioribose-1-phosphate (MTR-1-P) into methylthioribulose-1-phosphate (MTRu-1-P). This Koribacter versatilis (strain Ellin345) protein is Methylthioribose-1-phosphate isomerase.